The primary structure comprises 195 residues: MRVAQVVRNTSETQISVKIDLDGTGRQKLATGVPFLDHMLDQIARHGLVDLDIEANGDTHIDDHHTVEDVGITLGQAVAKAVGDRKGIRRYGHSYVPLDEALSRVVIDFSGRPGLEFHVPFTRARIGTFDVDLSIEFFRGFVNHAGVTLHIDNLRGVNAHHQLETVFKAFGRALRMAVELDERAAGQIPSTKGSL.

The protein belongs to the imidazoleglycerol-phosphate dehydratase family.

The protein resides in the cytoplasm. It carries out the reaction D-erythro-1-(imidazol-4-yl)glycerol 3-phosphate = 3-(imidazol-4-yl)-2-oxopropyl phosphate + H2O. It participates in amino-acid biosynthesis; L-histidine biosynthesis; L-histidine from 5-phospho-alpha-D-ribose 1-diphosphate: step 6/9. This Burkholderia pseudomallei (strain 1710b) protein is Imidazoleglycerol-phosphate dehydratase.